We begin with the raw amino-acid sequence, 882 residues long: DNA mismatch repair protein MutS (882 aa).

627 to 634 contacts ATP; that stretch reads GPNMAGKS.

This sequence belongs to the DNA mismatch repair MutS family.

This protein is involved in the repair of mismatches in DNA. It is possible that it carries out the mismatch recognition step. This protein has a weak ATPase activity. The protein is DNA mismatch repair protein MutS of Anaeromyxobacter sp. (strain K).